A 1339-amino-acid polypeptide reads, in one-letter code: MSAIGTLQVLGFLLSLARGSEMGNSQAVCPGTLNGLSVTGDADNQYQTLYKLYEKCEVVMGNLEIVLTGHNADLSFLQWIREVTGYVLVAMNEFSVLPLPNLRVVRGTQVYDGKFAIFVMLNYNTNSSHALRQLRFTQLTEILLGGVYIEKNDKLCHMDTIDWRDIVRVPDAEIVVKNNGGNCPPCHEVCKGRCWGPGPEDCQILTKTICAPQCNGRCFGPNPNQCCHDECAGGCSGPQDTDCFACRHFNDSGACVPRCPAPLVYNKLTFQLEPNPHIKYQYGGVCVASCPHNFVVDQTFCVRACPADKMEVDKNGLKMCEPCRGLCPKACEGTGSGSRYQTVDSSNIDGFVNCTKILGNLDFLITGLNGDPWHKIPALDPEKLNVFRTVREITGYLNIQSWPPHMHNFSVFSNLTTIGGRSLYNRGFSLLIMKNLNVTSLGFRSLKEISAGRVYISANQQLCYHHSLNWTRLLRGPAEERLDIKYNRPLGECVAEGKVCDPLCSSGGCWGPGPGQCLSCRNYSREGVCVTHCNVLQGEPREFVHEAHCFSCHPECQPMEGTSTCNGSGSDACARCAHFRDGPHCVNSCPHGILGAKGPIYKYPDAQNECRPCHENCTQGCKGPELQDCLGQAEVLMSKPHLVIAVTVGLTVIFLILGGSFLYWRGRRIQNKRAMRRYLERGESIEPLDPSEKANKVLARIFKETELRKLKVLGSGVFGTVHKGIWIPEGESIKIPVCIKVIEDKSGRQSFQAVTDHMLAVGSLDHAHIVRLLGLCPGSSLQLVTQYLPLGSLLDHVRQHRETLGPQLLLNWGVQIAKGMYYLEEHSMVHRDLALRNVMLKSPSQVQVADFGVADLLPPDDKQLLHSEAKTPIKWMALESIHFGKYTHQSDVWSYGVTVWELMTFGAEPYAGLRLAEIPDLLEKGERLAQPQICTIDVYMVMVKCWMIDENIRPTFKELANEFTRMARDPPRYLVIKRASGPGIPPAAEPSALSTKELQDAELEPDLDLDLDVEVEEEGLATTLGSALSLPTGTLTRPRGSQSLLSPSSGYMPMNQSNLGEACLDSAVLGGREQFSRPISLHPIPRGRQTSESSEGHVTGSEAELQERVSMCRSRSRSRSPRPRGDSAYHSQRHSLLTPVTPLSPPGLEEEDGNGYVMPDTHLRGTSSSREGTLSSVGLSSVLGTEEEDEDEEYEYMNRKRRGSPARPPRPGSLEELGYEYMDVGSDLSASLGSTQSCPLHPMAIVPSAGTTPDEDYEYMNRRRGAGGSGGDYAAMGACPAAEQGYEEMRAFQGPGHQAPHVRYARLKTLRSLEATDSAFDNPDYWHSRLFPKANAQRI.

An N-terminal signal peptide occupies residues 1–19 (MSAIGTLQVLGFLLSLARG). The Extracellular portion of the chain corresponds to 20–641 (SEMGNSQAVC…QAEVLMSKPH (622 aa)). N126 is a glycosylation site (N-linked (GlcNAc...) asparagine). 11 disulfides stabilise this stretch: C186–C194, C190–C202, C210–C218, C214–C226, C227–C235, C231–C243, C246–C255, C259–C286, C290–C301, C305–C320, and C323–C327. An N-linked (GlcNAc...) asparagine glycan is attached at N250. N353, N408, N414, N437, and N469 each carry an N-linked (GlcNAc...) asparagine glycan. 10 disulfides stabilise this stretch: C500–C509, C504–C517, C520–C529, C533–C549, C552–C565, C556–C573, C576–C585, C589–C610, C613–C621, and C617–C629. N522 carries N-linked (GlcNAc...) asparagine glycosylation. N566 carries an N-linked (GlcNAc...) asparagine glycan. N616 carries N-linked (GlcNAc...) asparagine glycosylation. The chain crosses the membrane as a helical span at residues 642–662 (LVIAVTVGLTVIFLILGGSFL). Residues 663-1339 (YWRGRRIQNK…LFPKANAQRI (677 aa)) are Cytoplasmic-facing. Residue S684 is modified to Phosphoserine. In terms of domain architecture, Protein kinase spans 707–964 (LRKLKVLGSG…TFKELANEFT (258 aa)). ATP contacts are provided by residues 713–721 (LGSGVFGTV), K740, 786–788 (QYL), and 832–837 (DLALRN). The active-site Proton acceptor is the D832. S980 is subject to Phosphoserine. Disordered regions lie at residues 1028–1052 (LSLPTGTLTRPRGSQSLLSPSSGYM), 1077–1156 (RPIS…GNGY), and 1181–1212 (SVLGTEEEDEDEEYEYMNRKRRGSPARPPRPG). Residues 1185–1195 (TEEEDEDEEYE) are compositionally biased toward acidic residues.

Belongs to the protein kinase superfamily. Tyr protein kinase family. EGF receptor subfamily. As to quaternary structure, monomer and homodimer. Heterodimer with each of the other ERBB receptors (Potential). Interacts with CSPG5, PA2G4, GRB7 and MUC1. Interacts with MYOC. Found in a ternary complex with NRG1 and ITGAV:ITGB3 or ITGA6:ITGB4. Autophosphorylated. Ligand-binding increases phosphorylation on tyrosine residues and promotes its association with the p85 subunit of phosphatidylinositol 3-kinase. As to expression, in the muscle, expression localizes to the synaptic sites of muscle fibers.

Its subcellular location is the membrane. It catalyses the reaction L-tyrosyl-[protein] + ATP = O-phospho-L-tyrosyl-[protein] + ADP + H(+). Tyrosine-protein kinase that plays an essential role as cell surface receptor for neuregulins. Binds to neuregulin-1 (NRG1) and is activated by it; ligand-binding increases phosphorylation on tyrosine residues and promotes its association with the p85 subunit of phosphatidylinositol 3-kinase. May also be activated by CSPG5. Involved in the regulation of myeloid cell differentiation. The sequence is that of Receptor tyrosine-protein kinase erbB-3 (Erbb3) from Mus musculus (Mouse).